The chain runs to 415 residues: Imidazolonepropionase (415 aa).

His-80 and His-82 together coordinate Fe(3+). His-80 and His-82 together coordinate Zn(2+). Residues Arg-89, Tyr-152, and His-185 each coordinate 4-imidazolone-5-propanoate. N-formimidoyl-L-glutamate is bound at residue Tyr-152. Residue His-250 participates in Fe(3+) binding. His-250 lines the Zn(2+) pocket. Gln-253 provides a ligand contact to 4-imidazolone-5-propanoate. A Fe(3+)-binding site is contributed by Asp-325. Residue Asp-325 participates in Zn(2+) binding. Asn-327 and Gly-329 together coordinate N-formimidoyl-L-glutamate. Position 330 (Thr-330) interacts with 4-imidazolone-5-propanoate.

The protein belongs to the metallo-dependent hydrolases superfamily. HutI family. Zn(2+) is required as a cofactor. Fe(3+) serves as cofactor.

The protein resides in the cytoplasm. The enzyme catalyses 4-imidazolone-5-propanoate + H2O = N-formimidoyl-L-glutamate. It participates in amino-acid degradation; L-histidine degradation into L-glutamate; N-formimidoyl-L-glutamate from L-histidine: step 3/3. Catalyzes the hydrolytic cleavage of the carbon-nitrogen bond in imidazolone-5-propanoate to yield N-formimidoyl-L-glutamate. It is the third step in the universal histidine degradation pathway. The protein is Imidazolonepropionase of Rhizobium meliloti (strain 1021) (Ensifer meliloti).